The sequence spans 442 residues: tRNA pseudouridine(38/39) synthase (442 aa).

Asp151 (nucleophile) is an active-site residue. Residue Tyr222 participates in substrate binding.

The protein belongs to the tRNA pseudouridine synthase TruA family.

It is found in the nucleus. It catalyses the reaction uridine(38/39) in tRNA = pseudouridine(38/39) in tRNA. Functionally, formation of pseudouridines at positions 38 and 39 in the anticodon stem and loop of transfer RNAs. The sequence is that of tRNA pseudouridine(38/39) synthase (DEG1) from Saccharomyces cerevisiae (strain ATCC 204508 / S288c) (Baker's yeast).